Here is a 220-residue protein sequence, read N- to C-terminus: Iron-sulfur cluster repair protein YtfE (220 aa).

It belongs to the RIC family. YtfE subfamily. Homodimer.

The protein localises to the cytoplasm. Functionally, di-iron-containing protein involved in the repair of iron-sulfur clusters damaged by oxidative and nitrosative stress conditions. The chain is Iron-sulfur cluster repair protein YtfE from Citrobacter koseri (strain ATCC BAA-895 / CDC 4225-83 / SGSC4696).